The chain runs to 251 residues: Proteasome subunit alpha type-4-like (251 aa).

The protein belongs to the peptidase T1A family. In terms of assembly, the 26S proteasome consists of a 20S proteasome core and two 19S regulatory subunits. The 20S proteasome core is composed of 28 subunits that are arranged in four stacked rings, resulting in a barrel-shaped structure. The two end rings are each formed by seven alpha subunits, and the two central rings are each formed by seven beta subunits. The catalytic chamber with the active sites is on the inside of the barrel. As to expression, testis, prominent after meiosis II. After meiosis, predominantly localized to the haploid spermatid nuclei of the 64-cell cysts, remaining during the elongation and condensation of the spermatid nuclei. In mature, motile sperm, expression is seen exclusively in the sperm head.

It localises to the nucleus. In terms of biological role, the proteasome is a multicatalytic proteinase complex which is characterized by its ability to cleave peptides with Arg, Phe, Tyr, Leu, and Glu adjacent to the leaving group at neutral or slightly basic pH. The proteasome has an ATP-dependent proteolytic activity. The chain is Proteasome subunit alpha type-4-like (Prosalpha3T) from Drosophila melanogaster (Fruit fly).